The primary structure comprises 96 residues: Co-chaperonin GroES (96 aa).

It belongs to the GroES chaperonin family. As to quaternary structure, heptamer of 7 subunits arranged in a ring. Interacts with the chaperonin GroEL.

Its subcellular location is the cytoplasm. Its function is as follows. Together with the chaperonin GroEL, plays an essential role in assisting protein folding. The GroEL-GroES system forms a nano-cage that allows encapsulation of the non-native substrate proteins and provides a physical environment optimized to promote and accelerate protein folding. GroES binds to the apical surface of the GroEL ring, thereby capping the opening of the GroEL channel. The polypeptide is Co-chaperonin GroES (Shewanella amazonensis (strain ATCC BAA-1098 / SB2B)).